Consider the following 291-residue polypeptide: Endo-1,4-beta-xylanase 11B (291 aa).

Residues 1-19 form the signal peptide; it reads MVAFSSLFLGASIAATALA. One can recognise a GH11 domain in the interval 34–222; it reads TYTQSATGTH…SSGSARINVG (189 aa). N93 carries an N-linked (GlcNAc...) asparagine glycan. Catalysis depends on E118, which acts as the Nucleophile. Residue E209 is the Proton donor of the active site. A disordered region spans residues 223–246; sequence GGSTGGGNNGGGNNGGNPGGNPGG. The CBM1 domain maps to 255–291; sequence NCSPRWGQCGGQGWNGPTCCESGTTCRQQNQWYSQCL.

Belongs to the glycosyl hydrolase 11 (cellulase G) family.

It is found in the secreted. It carries out the reaction Endohydrolysis of (1-&gt;4)-beta-D-xylosidic linkages in xylans.. The protein operates within glycan degradation; xylan degradation. With respect to regulation, the activity iss completely inhibited by Hg(2+), a metal ion that interacts with Trp and oxidizes the indole ring, and is significantly enhanced by beta-mercaptoethanol, which counteracts the oxidation effects of the S-S linkage between Cys residues. Endo-1,4-beta-xylanase involved in the hydrolysis of xylan, a major structural heterogeneous polysaccharide found in plant biomass representing the second most abundant polysaccharide in the biosphere, after cellulose. Shows maximum activity on soluble wheat arabinoxylan (defined as 100%), moderate activity on birchwood xylan (80.5%) and beechwood xylan (76.2%), and weak activity on insoluble wheat arabinoxylan (7.0%). Has no activity towards glucan or carboxymethyl cellulose-sodium (CMC-Na). This is Endo-1,4-beta-xylanase 11B from Humicola insolens (Soft-rot fungus).